Here is a 365-residue protein sequence, read N- to C-terminus: MTDSQQSKPKHVMMMAAGTGGHVFPALAVAKQLQQQGCQVSWLATPIGMENRLLKDQNIPIYQIDIQGVRGNGVIRKLAAPFKILKATFSAMRYMKQLKVDAVAGFGGYVAGPGGLAARLLGIPVLIHEQNAVAGFTNAQLSRVAKVVCEAFPNTFPASEKVVTTGNPVRREITDILSPKWRYDEREQAGKPLNILIVGGSLGAKALNERLPPALKQLQVPLNIFHQCGQQQVEATQALYADAPANLTVQVLPFIEDMAKAYSEADLIICRAGALTVTEVATAGVAAVFVPLPIAVDDHQTANAKFLADVGAAKICQQSTMTPEVLNQLFTTLMNRQLLTEMAVKARQHAQPNATQHVVGLIQKM.

UDP-N-acetyl-alpha-D-glucosamine contacts are provided by residues 19–21 (TGG), asparagine 131, arginine 170, serine 201, isoleucine 255, 274–279 (ALTVTE), and glutamine 300.

The protein belongs to the glycosyltransferase 28 family. MurG subfamily.

It is found in the cell inner membrane. It catalyses the reaction di-trans,octa-cis-undecaprenyl diphospho-N-acetyl-alpha-D-muramoyl-L-alanyl-D-glutamyl-meso-2,6-diaminopimeloyl-D-alanyl-D-alanine + UDP-N-acetyl-alpha-D-glucosamine = di-trans,octa-cis-undecaprenyl diphospho-[N-acetyl-alpha-D-glucosaminyl-(1-&gt;4)]-N-acetyl-alpha-D-muramoyl-L-alanyl-D-glutamyl-meso-2,6-diaminopimeloyl-D-alanyl-D-alanine + UDP + H(+). It participates in cell wall biogenesis; peptidoglycan biosynthesis. Functionally, cell wall formation. Catalyzes the transfer of a GlcNAc subunit on undecaprenyl-pyrophosphoryl-MurNAc-pentapeptide (lipid intermediate I) to form undecaprenyl-pyrophosphoryl-MurNAc-(pentapeptide)GlcNAc (lipid intermediate II). This chain is UDP-N-acetylglucosamine--N-acetylmuramyl-(pentapeptide) pyrophosphoryl-undecaprenol N-acetylglucosamine transferase, found in Acinetobacter baumannii (strain SDF).